The primary structure comprises 131 residues: UPF0102 protein Ent638_3585 (131 aa).

Positions Met-1–Gly-20 are disordered.

Belongs to the UPF0102 family.

This Enterobacter sp. (strain 638) protein is UPF0102 protein Ent638_3585.